A 428-amino-acid chain; its full sequence is Putative UPF0496 protein 5 (428 aa).

Basic residues predominate over residues 1–14 (MGNRHGIMRPRRLA). Residues 1 to 40 (MGNRHGIMRPRRLASGRSAAAAEEEGEDGEGEPGSYEAAC) are disordered. Over residues 22 to 31 (AEEEGEDGEG) the composition is skewed to acidic residues. Transmembrane regions (helical) follow at residues 229–249 (IVFL…AAIA) and 252–272 (PVAA…GKWM).

This sequence belongs to the UPF0496 family.

It localises to the membrane. The chain is Putative UPF0496 protein 5 from Oryza sativa subsp. indica (Rice).